The following is a 530-amino-acid chain: Asc-type amino acid transporter 1 (530 aa).

The disordered stretch occupies residues 1 to 36 (MRRDSDMASHIQQPGGHGNPGPAPSPSPGPGPGPGA). Residues 21 to 33 (GPAPSPSPGPGPG) show a composition bias toward pro residues. 10 helical membrane-spanning segments follow: residues 46-66 (IGLVSACTIIIGNIIGSGIFI), 78-98 (VGLALFVWVLGGGVTALGSLC), 119-139 (IFGGLAGFLLLWSAVLIMYPT), 192-212 (IQVIFTGGKLLALSLIITVGF), 274-294 (AIFISIPLVTFVYTFTNVAYF), 316-336 (LLGYFSWVMPVSVALSTFGGI), 368-388 (CTPIPALLVCCGATAVIMLVG), 394-414 (INYVSFINYLCYGVTILGLLV), 430-450 (LLVPVVYLVFWAFLLVFSFIS), and 454-474 (VCGVGIIIILTGVPIFFLGVF). Positions 508–530 (EEENGPMGQPSPLPITDKPLKTQ) are disordered.

It belongs to the amino acid-polyamine-organocation (APC) superfamily. In terms of assembly, disulfide-linked heterodimer with the amino acid transport protein SLC3A2/4F2hc.

The protein resides in the cell membrane. It carries out the reaction L-alanine(in) + glycine(out) = L-alanine(out) + glycine(in). It catalyses the reaction L-serine(out) + L-alanine(in) = L-serine(in) + L-alanine(out). The enzyme catalyses L-threonine(out) + L-alanine(in) = L-threonine(in) + L-alanine(out). The catalysed reaction is L-cysteine(out) + L-alanine(in) = L-cysteine(in) + L-alanine(out). It carries out the reaction 2-aminoisobutanoate(out) + L-alanine(in) = 2-aminoisobutanoate(in) + L-alanine(out). It catalyses the reaction D-serine(out) + L-alanine(in) = D-serine(in) + L-alanine(out). The enzyme catalyses D-alanine(out) + L-alanine(in) = D-alanine(in) + L-alanine(out). The catalysed reaction is L-valine(out) + L-alanine(in) = L-valine(in) + L-alanine(out). It carries out the reaction L-methionine(out) + L-alanine(in) = L-methionine(in) + L-alanine(out). It catalyses the reaction beta-alanine(out) + L-alanine(in) = beta-alanine(in) + L-alanine(out). The enzyme catalyses D-cysteine(out) + L-alanine(in) = D-cysteine(in) + L-alanine(out). The catalysed reaction is D-threonine(out) + L-alanine(in) = D-threonine(in) + L-alanine(out). It carries out the reaction D-isoleucine(out) + D-serine(in) = D-isoleucine(in) + D-serine(out). It catalyses the reaction D-serine(in) = D-serine(out). Its function is as follows. Associates with SLC3A2/4F2hc to form a functional heterodimeric complex that translocates small neutral L- and D-amino acids across the plasma membrane. Preferentially mediates exchange transport, but can also operate via facilitated diffusion. Acts as a major transporter for glycine, L- and D-serine in the central nervous system. At the spinal cord and brainstem regulates glycine metabolism and glycinergic inhibitory neurotransmission by providing for glycine de novo synthesis from L-serine and glycine recycling from astrocytes to glycinergic motor neurons. At Schaffer collateral-CA1 synapses mediates D-serine and glycine release that modulates post-synaptic activation of NMDA receptors and excitatory glutamatergic transmission. May regulate D-serine release from mesenchymal progenitors located in developing subcutaneous adipose tissue, favoring white adipocyte over thermogenic beige adipocyte lineage commitment. This is Asc-type amino acid transporter 1 (Slc7a10) from Rattus norvegicus (Rat).